The sequence spans 401 residues: Golgi membrane protein 1 (401 aa).

Position 1 is an N-acetylmethionine (methionine 1). At methionine 1–lysine 12 the chain is on the cytoplasmic side. Residues serine 13–alanine 35 traverse the membrane as a helical; Signal-anchor for type II membrane protein segment. Residues serine 36 to leucine 401 lie on the Lumenal side of the membrane. Residues valine 40–glutamate 205 are a coiled coil. The N-linked (GlcNAc...) (complex) asparagine glycan is linked to asparagine 109. Asparagine 144 carries N-linked (GlcNAc...) asparagine glycosylation. Positions threonine 178 to leucine 401 are disordered. A Phosphoserine modification is found at serine 187. Positions leucine 228–proline 238 are enriched in polar residues. Basic and acidic residues-rich tracts occupy residues leucine 244 to threonine 255 and glutamate 264 to valine 285. The span at glycine 286–glutamate 295 shows a compositional bias: gly residues. Residues glutamine 298–asparagine 312 show a composition bias toward polar residues. Phosphoserine; by FAM20C is present on serine 309. Acidic residues predominate over residues aspartate 350–serine 360. The segment covering glutamate 381–glutamate 395 has biased composition (basic and acidic residues). N-linked (GlcNAc...) asparagine glycosylation occurs at asparagine 398.

The protein belongs to the GOLM family. In terms of assembly, interacts with DYM. Glycosylated. Post-translationally, phosphorylation sites are present in the extracellular medium. Widely expressed. Highly expressed in colon, prostate, trachea and stomach. Expressed at lower level in testis, muscle, lymphoid tissues, white blood cells and spleen. Predominantly expressed by cells of the epithelial lineage. Expressed at low level in normal liver. Expression significantly increases in virus (HBV, HCV) infected liver. Expression does not increase in liver disease due to non-viral causes (alcohol-induced liver disease, autoimmune hepatitis). Increased expression in hepatocytes appears to be a general feature of advanced liver disease. In liver tissue from patients with adult giant-cell hepatitis (GCH), it is strongly expressed in hepatocytes-derived syncytial giant cells. Constitutively expressed by biliary epithelial cells but not by hepatocytes.

It localises to the golgi apparatus. Its subcellular location is the cis-Golgi network membrane. Its function is as follows. Unknown. Cellular response protein to viral infection. This chain is Golgi membrane protein 1 (GOLM1), found in Homo sapiens (Human).